The chain runs to 235 residues: Large ribosomal subunit protein uL1 (235 aa).

This sequence belongs to the universal ribosomal protein uL1 family. In terms of assembly, part of the 50S ribosomal subunit.

In terms of biological role, binds directly to 23S rRNA. The L1 stalk is quite mobile in the ribosome, and is involved in E site tRNA release. Protein L1 is also a translational repressor protein, it controls the translation of the L11 operon by binding to its mRNA. The protein is Large ribosomal subunit protein uL1 of Synechococcus sp. (strain CC9902).